A 190-amino-acid polypeptide reads, in one-letter code: Putative phosphatidylethanolamine-binding protein (190 aa).

It belongs to the phosphatidylethanolamine-binding protein family.

In Plasmodium falciparum, this protein is Putative phosphatidylethanolamine-binding protein.